The primary structure comprises 153 residues: Small ribosomal subunit protein bS16 (153 aa).

The protein belongs to the bacterial ribosomal protein bS16 family.

This Leifsonia xyli subsp. xyli (strain CTCB07) protein is Small ribosomal subunit protein bS16.